The primary structure comprises 700 residues: mRNA cap guanine-N(7) methyltransferase (700 aa).

Composition is skewed to basic and acidic residues over residues 1 to 10 (MVYDPIRDCD) and 52 to 67 (EPPR…ESHR). Disordered stretches follow at residues 1–263 (MVYD…SVLR) and 277–392 (AHAN…ERNK). The span at 113–128 (RSPSMSLSPRSQNQSL) shows a compositional bias: polar residues. 2 stretches are compositionally biased toward low complexity: residues 129–144 (PYPS…SAHP) and 220–241 (PQPT…TPHH). An mRNA cap 0 methyltransferase domain is found at 429-700 (SPIIGLKKFN…LYMGFAFEKM (272 aa)). 438–439 (NN) contributes to the mRNA binding site. Lys442, Gly461, Asp483, Asp512, Gln538, and Tyr543 together coordinate S-adenosyl-L-methionine.

This sequence belongs to the class I-like SAM-binding methyltransferase superfamily. mRNA cap 0 methyltransferase family.

The protein resides in the nucleus. It carries out the reaction a 5'-end (5'-triphosphoguanosine)-ribonucleoside in mRNA + S-adenosyl-L-methionine = a 5'-end (N(7)-methyl 5'-triphosphoguanosine)-ribonucleoside in mRNA + S-adenosyl-L-homocysteine. Responsible for methylating the 5'-cap structure of mRNAs. The sequence is that of mRNA cap guanine-N(7) methyltransferase (ABD1) from Cryptococcus neoformans var. neoformans serotype D (strain B-3501A) (Filobasidiella neoformans).